The chain runs to 431 residues: L-lysine N6-monooxygenase MbtG (431 aa).

A signal peptide spans 1–21 (MNPTLAVLGAGAKAVAVAAKA).

Belongs to the lysine N(6)-hydroxylase/L-ornithine N(5)-oxygenase family. FAD serves as cofactor.

It carries out the reaction L-lysine + NADPH + O2 = N(6)-hydroxy-L-lysine + NADP(+) + H2O. It functions in the pathway siderophore biosynthesis; mycobactin biosynthesis. In terms of biological role, flavoprotein monooxygenase required for N-hydroxylation of the two acylated lysine residues during mycobactin assembly, thus producing the hydroxamate groups necessary for iron sequestration. Is also able, but less efficiently, to hydroxylate L-lysine (non acylated) in vitro. The protein is L-lysine N6-monooxygenase MbtG (mbtG) of Mycobacterium bovis (strain ATCC BAA-935 / AF2122/97).